A 217-amino-acid chain; its full sequence is Ribosomal RNA small subunit methyltransferase G (217 aa).

S-adenosyl-L-methionine is bound by residues Gly79, Phe84, 130-131, and Arg148; that span reads AE.

The protein belongs to the methyltransferase superfamily. RNA methyltransferase RsmG family.

It is found in the cytoplasm. It carries out the reaction guanosine(527) in 16S rRNA + S-adenosyl-L-methionine = N(7)-methylguanosine(527) in 16S rRNA + S-adenosyl-L-homocysteine. Specifically methylates the N7 position of guanine in position 527 of 16S rRNA. This Myxococcus xanthus (strain DK1622) protein is Ribosomal RNA small subunit methyltransferase G.